The primary structure comprises 153 residues: Endoribonuclease YbeY (153 aa).

Residues His114, His118, and His124 each contribute to the Zn(2+) site.

It belongs to the endoribonuclease YbeY family. Requires Zn(2+) as cofactor.

It localises to the cytoplasm. Functionally, single strand-specific metallo-endoribonuclease involved in late-stage 70S ribosome quality control and in maturation of the 3' terminus of the 16S rRNA. The chain is Endoribonuclease YbeY from Shewanella baltica (strain OS223).